Here is a 173-residue protein sequence, read N- to C-terminus: Small ribosomal subunit protein uS5 (173 aa).

The S5 DRBM domain maps to 17–80 (WQERVIQIRR…ADGKKQLIDV (64 aa)).

It belongs to the universal ribosomal protein uS5 family. Part of the 30S ribosomal subunit. Contacts proteins S4 and S8.

With S4 and S12 plays an important role in translational accuracy. Functionally, located at the back of the 30S subunit body where it stabilizes the conformation of the head with respect to the body. This is Small ribosomal subunit protein uS5 from Crocosphaera subtropica (strain ATCC 51142 / BH68) (Cyanothece sp. (strain ATCC 51142)).